The chain runs to 180 residues: ATP synthase subunit delta (180 aa).

Belongs to the ATPase delta chain family. F-type ATPases have 2 components, F(1) - the catalytic core - and F(0) - the membrane proton channel. F(1) has five subunits: alpha(3), beta(3), gamma(1), delta(1), epsilon(1). CF(0) has four main subunits: a(1), b(1), b'(1) and c(10-14). The alpha and beta chains form an alternating ring which encloses part of the gamma chain. F(1) is attached to F(0) by a central stalk formed by the gamma and epsilon chains, while a peripheral stalk is formed by the delta, b and b' chains.

The protein localises to the cellular thylakoid membrane. F(1)F(0) ATP synthase produces ATP from ADP in the presence of a proton or sodium gradient. F-type ATPases consist of two structural domains, F(1) containing the extramembraneous catalytic core and F(0) containing the membrane proton channel, linked together by a central stalk and a peripheral stalk. During catalysis, ATP synthesis in the catalytic domain of F(1) is coupled via a rotary mechanism of the central stalk subunits to proton translocation. Its function is as follows. This protein is part of the stalk that links CF(0) to CF(1). It either transmits conformational changes from CF(0) to CF(1) or is implicated in proton conduction. In Prochlorococcus marinus subsp. pastoris (strain CCMP1986 / NIES-2087 / MED4), this protein is ATP synthase subunit delta.